Reading from the N-terminus, the 359-residue chain is MLYHLLYPLHTHISFFNVFQYITFRTIYASLTAFLICFLLGPFTIRTLARMQIGQYIRELGPQSHQGKAGTPTMGGLLIVFSVLVACLLWADLTNRYIWVTLAALAGFTTIGFIDDYLMQIKKRNKGLSARAKFLAQTVLAAGICLLIFAASDTNTVLLVPFFKRVAPDLGLFYIVLGVFVIVGTSNAVNLTDGLDGLVTGPLVISFVAYMVFAYVAGNAIISNYLQVIHVPGSGEVTVFCGAMAGGLMGFLWFNAYPAQIFMGDVGSLSLGGALGTVAIITKQEILLTLVGGLFVVETLSVIFQVGFFKATKGRRIFRMAPLHHHFELKGWAEPKIIVRFWIIAIALALIAVSTLKIR.

10 helical membrane-spanning segments follow: residues tyrosine 21–glycine 41, threonine 73–leucine 93, isoleucine 98–leucine 118, glycine 143–phenylalanine 163, valine 166–serine 186, proline 202–isoleucine 222, valine 237–tyrosine 257, isoleucine 261–isoleucine 281, isoleucine 286–valine 306, and lysine 336–leucine 356.

Belongs to the glycosyltransferase 4 family. MraY subfamily. Mg(2+) is required as a cofactor.

The protein localises to the cell inner membrane. The catalysed reaction is UDP-N-acetyl-alpha-D-muramoyl-L-alanyl-gamma-D-glutamyl-meso-2,6-diaminopimeloyl-D-alanyl-D-alanine + di-trans,octa-cis-undecaprenyl phosphate = di-trans,octa-cis-undecaprenyl diphospho-N-acetyl-alpha-D-muramoyl-L-alanyl-D-glutamyl-meso-2,6-diaminopimeloyl-D-alanyl-D-alanine + UMP. Its pathway is cell wall biogenesis; peptidoglycan biosynthesis. In terms of biological role, catalyzes the initial step of the lipid cycle reactions in the biosynthesis of the cell wall peptidoglycan: transfers peptidoglycan precursor phospho-MurNAc-pentapeptide from UDP-MurNAc-pentapeptide onto the lipid carrier undecaprenyl phosphate, yielding undecaprenyl-pyrophosphoryl-MurNAc-pentapeptide, known as lipid I. The protein is Phospho-N-acetylmuramoyl-pentapeptide-transferase of Desulfosudis oleivorans (strain DSM 6200 / JCM 39069 / Hxd3) (Desulfococcus oleovorans).